The sequence spans 867 residues: Glucans biosynthesis glucosyltransferase H (867 aa).

Positions 71–91 are disordered; sequence DDEGRTQLETMPKATRSSISP. 6 helical membrane-spanning segments follow: residues 139–156, 194–216, 518–540, 568–590, 603–625, and 680–702; these read YILL…TWYM, ILIL…LMGF, VMSY…LQVV, IALL…LLIW, VTIS…MLFH, and FLFW…VFSS.

This sequence belongs to the glycosyltransferase 2 family. OpgH subfamily.

The protein resides in the cell inner membrane. The protein operates within glycan metabolism; osmoregulated periplasmic glucan (OPG) biosynthesis. Its function is as follows. Involved in the biosynthesis of osmoregulated periplasmic glucans (OPGs). In Nitrosomonas europaea (strain ATCC 19718 / CIP 103999 / KCTC 2705 / NBRC 14298), this protein is Glucans biosynthesis glucosyltransferase H.